A 597-amino-acid polypeptide reads, in one-letter code: Elongation factor 4 (597 aa).

The 183-residue stretch at 2-184 (DHIRNFSIIA…SLIAKVPPPK (183 aa)) folds into the tr-type G domain. GTP contacts are provided by residues 14 to 19 (DHGKST) and 131 to 134 (NKID).

This sequence belongs to the TRAFAC class translation factor GTPase superfamily. Classic translation factor GTPase family. LepA subfamily.

It localises to the cell inner membrane. The catalysed reaction is GTP + H2O = GDP + phosphate + H(+). Functionally, required for accurate and efficient protein synthesis under certain stress conditions. May act as a fidelity factor of the translation reaction, by catalyzing a one-codon backward translocation of tRNAs on improperly translocated ribosomes. Back-translocation proceeds from a post-translocation (POST) complex to a pre-translocation (PRE) complex, thus giving elongation factor G a second chance to translocate the tRNAs correctly. Binds to ribosomes in a GTP-dependent manner. The sequence is that of Elongation factor 4 from Burkholderia pseudomallei (strain 1710b).